We begin with the raw amino-acid sequence, 474 residues long: Stabilizer of axonemal microtubules 1 (474 aa).

12 mn regions span residues 30 to 64 (KPCLLSEYTENYPCYHSYLPRESFKPRREYQKGSI), 65 to 97 (PMEGLTTSRRDFGPHKVAPVKAHQYDQFVPSEE), 98 to 131 (NMDLLTTYKKDYNPYTVCRVDPIKPRDSKYPYSN), 132 to 165 (KMEYLPTYKADYLPWNQPRRQPLRLEHKYQPASV), 166 to 199 (RFDNRTTHQDDYPIKGLVKTVSCKPLAMPKLCNI), 200 to 232 (PLEDVTNYKMSYVAHPVEKRFVHEAEKFRPCEI), 233 to 266 (PFESLTTHKQSYRGLMGEPAKSLKPLARPPGLDM), 267 to 299 (PFSNTTEFRDKYQAWPTPQMFSKAPITYVPPED), 300 to 332 (SMDLLTTVQAHYTYPKGVPARSCRPAPQIRKSG), 333 to 366 (RFEGSSTTKDDYKQWSSMRTEPVKPIPQLDFPTE), 367 to 400 (PLDCLTTTRAHYVPHPPINTKSCKPHWSGPRGNV), and 401 to 434 (PVEGQTTYTISFTPKEMSKCLASYPEPPGYTFEE). The interval 318 to 350 (PARSCRPAPQIRKSGRFEGSSTTKDDYKQWSSM) is disordered. The segment at 444-474 (KPVSQAGSQQSSHLSVDDSENPSQRKLEVSA) is disordered. Residues 448–457 (QAGSQQSSHL) are compositionally biased toward polar residues.

It belongs to the FAM154 family. In terms of assembly, associates with microtubules via the Mn regions.

It localises to the cytoplasm. The protein resides in the cytoskeleton. It is found in the microtubule organizing center. Its subcellular location is the centrosome. The protein localises to the centriole. It localises to the cilium basal body. The protein resides in the cilium axoneme. It is found in the flagellum axoneme. Functionally, may play a role in the regulation of cilium length. Stabilizes microtubules at low temperature. This Macaca fascicularis (Crab-eating macaque) protein is Stabilizer of axonemal microtubules 1 (SAXO1).